The following is a 369-amino-acid chain: Zeaxanthin 7,8(7',8')-cleavage dioxygenase, chromoplastic (369 aa).

4 residues coordinate Fe cation: H62, H112, H177, and H356.

This sequence belongs to the carotenoid oxygenase family. Requires Fe(2+) as cofactor. As to expression, in the style branches.

It is found in the plastid. It localises to the chromoplast. It carries out the reaction all-trans-zeaxanthin + 2 O2 = crocetin dialdehyde + 2 3beta-hydroxy-beta-cyclocitral. Cleaves zeaxanthin symmetrically at the 7-8 and 7'-8' double bonds to produce crocetin dialdehyde and hydroxy-beta-cyclocitral, two water-soluble precursors sequestred in vacuoles and involved in the synthesis of saffron pigment and aroma. The polypeptide is Zeaxanthin 7,8(7',8')-cleavage dioxygenase, chromoplastic (ZCD) (Crocus sativus (Saffron)).